A 99-amino-acid chain; its full sequence is Protein Tat (99 aa).

Residues 1–20 form a disordered region; it reads MELVDPNLDPWNHPGSQPTT. Residues 1 to 24 form an interaction with human CREBBP region; it reads MELVDPNLDPWNHPGSQPTTPCTR. Positions 1–48 are transactivation; the sequence is MELVDPNLDPWNHPGSQPTTPCTRCYCKWCCFHCYWCFTTKGLGISYG. Residues Cys22, Cys25, and Cys27 each coordinate Zn(2+). Residues 22–37 form a cysteine-rich region; that stretch reads CTRCYCKWCCFHCYWC. Lys28 carries the post-translational modification N6-acetyllysine; by host PCAF. Cys30, His33, Cys34, and Cys37 together coordinate Zn(2+). The interval 38–48 is core; it reads FTTKGLGISYG. The disordered stretch occupies residues 48–99; that stretch reads GRKKRRQRPRTPQSSQIHQDFVPKQPISQARGNPTGPKESKKEVESKAKTDP. Residues 49 to 57 carry the Nuclear localization signal, RNA-binding (TAR), and protein transduction motif; that stretch reads RKKRRQRPR. The segment at 49-86 is interaction with the host capping enzyme RNGTT; that stretch reads RKKRRQRPRTPQSSQIHQDFVPKQPISQARGNPTGPKE. 2 positions are modified to N6-acetyllysine; by host EP300 and GCN5L2: Lys50 and Lys51. An asymmetric dimethylarginine; by host PRMT6 mark is found at Arg52 and Arg53. Residue Lys71 forms a Glycyl lysine isopeptide (Lys-Gly) (interchain with G-Cter in ubiquitin) linkage. Residues 85–99 show a composition bias toward basic and acidic residues; sequence KESKKEVESKAKTDP.

The protein belongs to the lentiviruses Tat family. In terms of assembly, interacts with host CCNT1. Associates with the P-TEFb complex composed at least of Tat, P-TEFb (CDK9 and CCNT1), TAR RNA, RNA Pol II. Recruits the HATs CREBBP, TAF1/TFIID, EP300, PCAF and GCN5L2. Interacts with host KAT5/Tip60; this interaction targets the latter to degradation. Interacts with the host deacetylase SIRT1. Interacts with host capping enzyme RNGTT; this interaction stimulates RNGTT. Binds to host KDR, and to the host integrins ITGAV/ITGB3 and ITGA5/ITGB1. Interacts with host KPNB1/importin beta-1 without previous binding to KPNA1/importin alpha-1. Interacts with EIF2AK2. Interacts with host nucleosome assembly protein NAP1L1; this interaction may be required for the transport of Tat within the nucleus, since the two proteins interact at the nuclear rim. Interacts with host C1QBP/SF2P32; this interaction involves lysine-acetylated Tat. Interacts with the host chemokine receptors CCR2, CCR3 and CXCR4. Interacts with host DPP4/CD26; this interaction may trigger an anti-proliferative effect. Interacts with host LDLR. Interacts with the host extracellular matrix metalloproteinase MMP1. Interacts with host PRMT6; this interaction mediates Tat's methylation. Interacts with, and is ubiquitinated by MDM2/Hdm2. Interacts with host PSMC3 and HTATIP2. Interacts with STAB1; this interaction may overcome SATB1-mediated repression of IL2 and IL2RA (interleukin) in T cells by binding to the same domain than HDAC1. Interacts (when acetylated) with human CDK13, thereby increasing HIV-1 mRNA splicing and promoting the production of the doubly spliced HIV-1 protein Nef. Interacts with host TBP; this interaction modulates the activity of transcriptional pre-initiation complex. Interacts with host RELA. Interacts with host PLSCR1; this interaction negatively regulates Tat transactivation activity by altering its subcellular distribution. Post-translationally, asymmetrical arginine methylation by host PRMT6 seems to diminish the transactivation capacity of Tat and affects the interaction with host CCNT1. Acetylation by EP300, CREBBP, GCN5L2/GCN5 and PCAF regulates the transactivation activity of Tat. EP300-mediated acetylation of Lys-50 promotes dissociation of Tat from the TAR RNA through the competitive binding to PCAF's bromodomain. In addition, the non-acetylated Tat's N-terminus can also interact with PCAF. PCAF-mediated acetylation of Lys-28 enhances Tat's binding to CCNT1. Lys-50 is deacetylated by SIRT1. In terms of processing, polyubiquitination by host MDM2 does not target Tat to degradation, but activates its transactivation function and fosters interaction with CCNT1 and TAR RNA. Post-translationally, phosphorylated by EIF2AK2 on serine and threonine residues adjacent to the basic region important for TAR RNA binding and function. Phosphorylation of Tat by EIF2AK2 is dependent on the prior activation of EIF2AK2 by dsRNA.

It is found in the host nucleus. The protein resides in the host nucleolus. Its subcellular location is the host cytoplasm. It localises to the secreted. Its function is as follows. Transcriptional activator that increases RNA Pol II processivity, thereby increasing the level of full-length viral transcripts. Recognizes a hairpin structure at the 5'-LTR of the nascent viral mRNAs referred to as the transactivation responsive RNA element (TAR) and recruits the cyclin T1-CDK9 complex (P-TEFb complex) that will in turn hyperphosphorylate the RNA polymerase II to allow efficient elongation. The CDK9 component of P-TEFb and other Tat-activated kinases hyperphosphorylate the C-terminus of RNA Pol II that becomes stabilized and much more processive. Other factors such as HTATSF1/Tat-SF1, SUPT5H/SPT5, and HTATIP2 are also important for Tat's function. Besides its effect on RNA Pol II processivity, Tat induces chromatin remodeling of proviral genes by recruiting the histone acetyltransferases (HATs) CREBBP, EP300 and PCAF to the chromatin. This also contributes to the increase in proviral transcription rate, especially when the provirus integrates in transcriptionally silent region of the host genome. To ensure maximal activation of the LTR, Tat mediates nuclear translocation of NF-kappa-B by interacting with host RELA. Through its interaction with host TBP, Tat may also modulate transcription initiation. Tat can reactivate a latently infected cell by penetrating in it and transactivating its LTR promoter. In the cytoplasm, Tat is thought to act as a translational activator of HIV-1 mRNAs. In terms of biological role, extracellular circulating Tat can be endocytosed by surrounding uninfected cells via the binding to several surface receptors such as CD26, CXCR4, heparan sulfate proteoglycans (HSPG) or LDLR. Neurons are rarely infected, but they internalize Tat via their LDLR. Through its interaction with nuclear HATs, Tat is potentially able to control the acetylation-dependent cellular gene expression. Modulates the expression of many cellular genes involved in cell survival, proliferation or in coding for cytokines or cytokine receptors. Tat plays a role in T-cell and neurons apoptosis. Tat induced neurotoxicity and apoptosis probably contribute to neuroAIDS. Circulating Tat also acts as a chemokine-like and/or growth factor-like molecule that binds to specific receptors on the surface of the cells, affecting many cellular pathways. In the vascular system, Tat binds to ITGAV/ITGB3 and ITGA5/ITGB1 integrins dimers at the surface of endothelial cells and competes with bFGF for heparin-binding sites, leading to an excess of soluble bFGF. This Homo sapiens (Human) protein is Protein Tat.